Here is a 525-residue protein sequence, read N- to C-terminus: Bifunctional purine biosynthesis protein PurH (525 aa).

Residues 1 to 149 enclose the MGS-like domain; that stretch reads MSDPVIKRAL…KNNESVTVVT (149 aa).

Belongs to the PurH family.

The enzyme catalyses (6R)-10-formyltetrahydrofolate + 5-amino-1-(5-phospho-beta-D-ribosyl)imidazole-4-carboxamide = 5-formamido-1-(5-phospho-D-ribosyl)imidazole-4-carboxamide + (6S)-5,6,7,8-tetrahydrofolate. It carries out the reaction IMP + H2O = 5-formamido-1-(5-phospho-D-ribosyl)imidazole-4-carboxamide. Its pathway is purine metabolism; IMP biosynthesis via de novo pathway; 5-formamido-1-(5-phospho-D-ribosyl)imidazole-4-carboxamide from 5-amino-1-(5-phospho-D-ribosyl)imidazole-4-carboxamide (10-formyl THF route): step 1/1. It participates in purine metabolism; IMP biosynthesis via de novo pathway; IMP from 5-formamido-1-(5-phospho-D-ribosyl)imidazole-4-carboxamide: step 1/1. This Prosthecochloris aestuarii (strain DSM 271 / SK 413) protein is Bifunctional purine biosynthesis protein PurH.